The chain runs to 272 residues: MSLLLLQLLVLSCLGDTEPQPDSQQRKRRPLQHLFYLDRNLLESQSFHELVGENPVGVKETQEEPSFFIAFPQTAGESQKQGEKKMSRFILPNAELYAHQDLRTWAAPKEISPVENFSPSYYSNKRDVEPPYRKDAKKFWDHFMLRKNSASEEVVLPIKTNEMHQETCRTLPFSQSVAHESCEKVIVQNNLCFGKCSSFHVPGPDDRLYTFCSKCLPTKFSMKHLDLNCTSSVPVVKKVMIVEECNCETQKIEDPLLGSRQSDFLGNLPEHN.

The first 19 residues, 1 to 19, serve as a signal peptide directing secretion; that stretch reads MSLLLLQLLVLSCLGDTEP. 4 cysteine pairs are disulfide-bonded: cysteine 168/cysteine 215, cysteine 182/cysteine 229, cysteine 192/cysteine 245, and cysteine 196/cysteine 247. The region spanning 168–253 is the CTCK domain; it reads CRTLPFSQSV…ECNCETQKIE (86 aa). N-linked (GlcNAc...) asparagine glycosylation is present at asparagine 228.

This sequence belongs to the DAN family.

It is found in the secreted. In terms of biological role, cytokine that acts as a regulator of the activity of Nodal/BMP pathways during the establishment of bilateral asymmetry in the head and trunk of the embryo. This is Cerberus (CER1) from Gallus gallus (Chicken).